A 128-amino-acid polypeptide reads, in one-letter code: Large ribosomal subunit protein bL12 (128 aa).

It belongs to the bacterial ribosomal protein bL12 family. Homodimer. Part of the ribosomal stalk of the 50S ribosomal subunit. Forms a multimeric L10(L12)X complex, where L10 forms an elongated spine to which 2 to 4 L12 dimers bind in a sequential fashion. Binds GTP-bound translation factors.

Functionally, forms part of the ribosomal stalk which helps the ribosome interact with GTP-bound translation factors. Is thus essential for accurate translation. The protein is Large ribosomal subunit protein bL12 of Sorangium cellulosum (strain So ce56) (Polyangium cellulosum (strain So ce56)).